We begin with the raw amino-acid sequence, 396 residues long: Cytochrome b (396 aa).

Transmembrane regions (helical) follow at residues 37-57 (FGSL…ILAM), 81-102 (WLMR…YAHI), 117-137 (WNVG…GYVL), and 182-202 (FFTF…IHIM). Heme b-binding residues include H87 and H101. H186 and H200 together coordinate heme b. H205 contributes to the a ubiquinone binding site. 4 consecutive transmembrane segments (helical) span residues 230–250 (FKDI…SLLA), 292–312 (LGGV…PFTH), 324–344 (LAQI…WLGG), and 351–371 (FILM…LVFP).

It belongs to the cytochrome b family. In terms of assembly, the cytochrome bc1 complex contains 3 respiratory subunits (MT-CYB, CYC1 and UQCRFS1), 2 core proteins (UQCRC1 and UQCRC2) and probably 6 low-molecular weight proteins. Requires heme b as cofactor.

The protein localises to the mitochondrion inner membrane. In terms of biological role, component of the ubiquinol-cytochrome c reductase complex (complex III or cytochrome b-c1 complex) that is part of the mitochondrial respiratory chain. The b-c1 complex mediates electron transfer from ubiquinol to cytochrome c. Contributes to the generation of a proton gradient across the mitochondrial membrane that is then used for ATP synthesis. This chain is Cytochrome b (mt-cyb), found in Petromyzon marinus (Sea lamprey).